The following is a 535-amino-acid chain: Calcium-dependent protein kinase 5 (535 aa).

Residues 1-46 (MGNACRGSFGGKTFQGYPQPQDHSESNSNPKHNSDSPKPKKEQQPL) are disordered. Gly2 carries the N-myristoyl glycine lipid modification. Cys5 is lipidated: S-palmitoyl cysteine. Positions 32 to 43 (HNSDSPKPKKEQ) are enriched in basic and acidic residues. One can recognise a Protein kinase domain in the interval 72–330 (YTLGRKLGQG…AHEVLCHPWI (259 aa)). ATP-binding positions include 78 to 86 (LGQGQFGTT) and Lys101. The active-site Proton acceptor is the Asp196. The tract at residues 336–366 (APDRALDPAVLSRLKHFSAMNKLKKMALRVI) is autoinhibitory domain. EF-hand domains lie at 373-408 (EEIA…YGST), 409-444 (LKDI…LNKL), 445-480 (DREE…HNIT), and 484-514 (FEDI…GNPC). Ca(2+)-binding residues include Asp386, Asp388, Ser390, Glu397, Asp422, Asp424, Ser426, Thr428, Glu433, Asp458, Asp460, Ser462, Tyr464, Glu469, Asp492, Asp494, Asp496, Arg498, and Glu503.

The protein belongs to the protein kinase superfamily. Ser/Thr protein kinase family. CDPK subfamily.

It is found in the cell membrane. The enzyme catalyses L-seryl-[protein] + ATP = O-phospho-L-seryl-[protein] + ADP + H(+). It catalyses the reaction L-threonyl-[protein] + ATP = O-phospho-L-threonyl-[protein] + ADP + H(+). Activated by calcium. Autophosphorylation may play an important role in the regulation of the kinase activity. In terms of biological role, regulates the production of reactive oxygen species (ROS) by NADPH oxidase. In Solanum tuberosum (Potato), this protein is Calcium-dependent protein kinase 5 (CPK5).